The chain runs to 584 residues: Proline--tRNA ligase (584 aa).

The interval Ala-242–Asp-261 is disordered.

Belongs to the class-II aminoacyl-tRNA synthetase family. ProS type 1 subfamily. Homodimer.

It is found in the cytoplasm. The catalysed reaction is tRNA(Pro) + L-proline + ATP = L-prolyl-tRNA(Pro) + AMP + diphosphate. In terms of biological role, catalyzes the attachment of proline to tRNA(Pro) in a two-step reaction: proline is first activated by ATP to form Pro-AMP and then transferred to the acceptor end of tRNA(Pro). As ProRS can inadvertently accommodate and process non-cognate amino acids such as alanine and cysteine, to avoid such errors it has two additional distinct editing activities against alanine. One activity is designated as 'pretransfer' editing and involves the tRNA(Pro)-independent hydrolysis of activated Ala-AMP. The other activity is designated 'posttransfer' editing and involves deacylation of mischarged Ala-tRNA(Pro). The misacylated Cys-tRNA(Pro) is not edited by ProRS. This is Proline--tRNA ligase from Salinispora arenicola (strain CNS-205).